A 486-amino-acid polypeptide reads, in one-letter code: N-succinylglutamate 5-semialdehyde dehydrogenase (486 aa).

221–226 (GSSATG) lines the NAD(+) pocket. Residues glutamate 244 and cysteine 278 contribute to the active site.

It belongs to the aldehyde dehydrogenase family. AstD subfamily.

The catalysed reaction is N-succinyl-L-glutamate 5-semialdehyde + NAD(+) + H2O = N-succinyl-L-glutamate + NADH + 2 H(+). It functions in the pathway amino-acid degradation; L-arginine degradation via AST pathway; L-glutamate and succinate from L-arginine: step 4/5. Catalyzes the NAD-dependent reduction of succinylglutamate semialdehyde into succinylglutamate. This is N-succinylglutamate 5-semialdehyde dehydrogenase from Chromobacterium violaceum (strain ATCC 12472 / DSM 30191 / JCM 1249 / CCUG 213 / NBRC 12614 / NCIMB 9131 / NCTC 9757 / MK).